We begin with the raw amino-acid sequence, 132 residues long: uncharacterized protein (132 aa).

The disordered stretch occupies residues 68–91; it reads WSRTSPNSSRSSPRSPASMASTSS.

This is an uncharacterized protein from Streptomyces cacaoi.